A 1262-amino-acid chain; its full sequence is Separin homolog sep-1 (1262 aa).

Residues 957–1051 (VQNAYYILDP…SVRTIPQALG (95 aa)) form the Peptidase C50 domain. C1040 is a catalytic residue. The tract at residues 1147–1262 (KDQRNLPQTP…ARTPSRSRNL (116 aa)) is disordered. Composition is skewed to polar residues over residues 1151–1162 (NLPQTPKTSART) and 1177–1197 (FVTS…NKSP). Residues 1243–1262 (TPTTRTTRSSARTPSRSRNL) show a composition bias toward low complexity.

Forms a complex with securin-like protein ify-1 (via C-terminus). Interaction with ify-1 stabilizes sep-1. Also maintains the complex in the cytoplasm during interphase and recruits it to chromosomes during the first meiotic division. As to expression, expressed in oocytes. Expressed in male germline. Expressed in spermatocytes but undetectable in spermatids (at protein level).

Its subcellular location is the cytoplasm. The protein resides in the chromosome. It is found in the cytoplasmic granule. The protein localises to the cytoskeleton. It localises to the microtubule organizing center. Its subcellular location is the centrosome. The protein resides in the spindle. It is found in the cleavage furrow. The protein localises to the midbody. The catalysed reaction is All bonds known to be hydrolyzed by this endopeptidase have arginine in P1 and an acidic residue in P4. P6 is often occupied by an acidic residue or by a hydroxy-amino-acid residue, the phosphorylation of which enhances cleavage.. With respect to regulation, probably maintained in an inactive state via its interaction with securin ify-1 which acts as a pseudosubstrate thereby blocking access to the catalytic site. Upon ify-1 degradation at the onset of anaphase, sep-1 is likely to become active. In addition, interaction with ify-1 stabilizes sep-1. Its function is as follows. Cysteine protease, which plays a central role in homologous chromosome separation during meiosis I and in sister chromatid separation during embryonic mitosis. Promotes chromosome/sister chromatid segregation by cleaving the scc-1 (mitosis) and rec-8 (meiosis) subunits of the cohesin complex at the onset of anaphase. May cleave histone H3-like protein cpar-1 during meiosis I metaphase-anaphase transition. Promotes cortical granule exocytosis after oocyte fertilization during the first meiotic anaphase. Essential for embryonic cytokinesis by regulating rab-11-positive vesicle trafficking at the plasma membrane at the cleavage furrow and midbody. Regulates centriole segregation during spermatocyte meiosis. Required for embryonic anterior-posterior axis formation. This is Separin homolog sep-1 from Caenorhabditis elegans.